The sequence spans 243 residues: Sugar fermentation stimulation protein homolog (243 aa).

The protein belongs to the SfsA family.

This is Sugar fermentation stimulation protein homolog from Lacticaseibacillus casei (strain BL23) (Lactobacillus casei).